The sequence spans 37 residues: MSDIN-like toxin proprotein 5 (37 aa).

Positions 1 to 10 (MSDINATRLP) are excised as a propeptide. Positions 11–20 (LFFPPDFRPP) form a cross-link, cyclopeptide (Leu-Pro). The propeptide occupies 21 to 37 (CVGDADNFTLTRGENLC).

The protein belongs to the MSDIN fungal toxin family. Processed by the macrocyclase-peptidase enzyme POPB to yield a toxic cyclic decapeptide. POPB first removes 10 residues from the N-terminus. Conformational trapping of the remaining peptide forces the enzyme to release this intermediate rather than proceed to macrocyclization. The enzyme rebinds the remaining peptide in a different conformation and catalyzes macrocyclization of the N-terminal 10 residues. In terms of tissue distribution, expressed in basidiocarps.

Functionally, probable toxin that belongs to the MSDIN-like toxin family responsible for a large number of food poisoning cases and deaths. This Amanita exitialis (Guangzhou destroying angel) protein is MSDIN-like toxin proprotein 5.